The following is a 416-amino-acid chain: Enterobactin exporter EntS (416 aa).

Residues 1 to 21 (MNKQSWLLNLSLLKTHPAFRA) are Cytoplasmic-facing. Residues 22–42 (VFLARFISIVSLGLLGVAVPV) form a helical membrane-spanning segment. Topologically, residues 43–55 (QIQMMTHSTWQVG) are periplasmic. Residues 56 to 76 (LSVTLTGGAMFVGLMVGGVLA) form a helical membrane-spanning segment. At 77–83 (DRYERKK) the chain is on the cytoplasmic side. A helical membrane pass occupies residues 84 to 104 (VILLARGTCGIGFIGLCLNAL). Residues 105–109 (LPEPS) are Periplasmic-facing. The helical transmembrane segment at 110–130 (LLAIYLLGLWDGFFASLGVTA) threads the bilayer. Topologically, residues 131–156 (LLAATPALVGRENLMQAGAITMLTVR) are cytoplasmic. A helical membrane pass occupies residues 157–177 (LGSVNSPMIGGLLLAIGGVAW). A topological domain (periplasmic) is located at residue Asn178. A helical transmembrane segment spans residues 179–199 (YGLAAAGTFITLLPLLSLPAL). Over 200–218 (PPPPQPREHPLKSLLAGFR) the chain is Cytoplasmic. Residues 219 to 239 (FLLASPLVGGIALLGGLLTMA) traverse the membrane as a helical segment. Residues 240–256 (SAVRVLYPALADNWQMS) lie on the Periplasmic side of the membrane. The chain crosses the membrane as a helical span at residues 257 to 277 (AAQIGFLYAAIPLGAAIGALT). The Cytoplasmic portion of the chain corresponds to 278–287 (SGKLAHSARP). Residues 288 to 307 (GLLMLLSTLGSFLAIGLFGL) traverse the membrane as a helical segment. Over 308–313 (MPMWIL) the chain is Periplasmic. A helical membrane pass occupies residues 314-336 (GVVCLALFGWLSAVSSLLQYTML). The Cytoplasmic portion of the chain corresponds to 337-356 (QTQTPEVMLGRINGLWTAQN). Residues 357-377 (VTGDAIGAALLGGLGAMMTPV) traverse the membrane as a helical segment. Residue Ala378 is a topological domain, periplasmic. A helical membrane pass occupies residues 379–399 (SASASGFGLLIIGVLLLLVLV). The Cytoplasmic portion of the chain corresponds to 400 to 416 (ELRHFRQTPPQVTASDS).

The protein belongs to the major facilitator superfamily. EntS (TC 2.A.1.38) family.

The protein localises to the cell inner membrane. Component of an export pathway for enterobactin. This is Enterobactin exporter EntS from Shigella dysenteriae serotype 1 (strain Sd197).